The following is a 961-amino-acid chain: DNA repair endonuclease XPF (961 aa).

3 disordered regions span residues 1-27, 451-485, and 674-693; these read MADS…SADT, NYAK…PPLA, and PTDE…QATK. Over residues 13-22 the composition is skewed to basic and acidic residues; that stretch reads TENERPKEVE. Over residues 458–469 the composition is skewed to polar residues; the sequence is TRSAPPKNVSSN. An ERCC4 domain is found at 697–777; that stretch reads KVIVDMREFR…KPILLIEFDQ (81 aa).

It belongs to the XPF family. As to quaternary structure, heterodimer. Interacts with hdm.

Its subcellular location is the nucleus. Functionally, implicated in recombination events during meiosis, mostly in meiotic exchange. May directly resolve Holliday junctions within recombination intermediates leading to DNA exchange. Also required for the repair of mismatches within meiotic heteroduplex DNA and for nucleotide excision repair. The chain is DNA repair endonuclease XPF (mei-9) from Drosophila melanogaster (Fruit fly).